Here is a 638-residue protein sequence, read N- to C-terminus: 3D-(3,5/4)-trihydroxycyclohexane-1,2-dione hydrolase (638 aa).

Glutamate 67 is a thiamine diphosphate binding site. The tract at residues 442–523 (SLPGDLQRLW…INIMLFDNSG (82 aa)) is thiamine pyrophosphate binding. Aspartate 494 and asparagine 521 together coordinate Mg(2+).

It belongs to the TPP enzyme family. Mg(2+) serves as cofactor. It depends on thiamine diphosphate as a cofactor.

It carries out the reaction 3D-3,5/4-trihydroxycyclohexane-1,2-dione + H2O = 5-deoxy-D-glucuronate + H(+). It participates in polyol metabolism; myo-inositol degradation into acetyl-CoA; acetyl-CoA from myo-inositol: step 3/7. Its function is as follows. Involved in the cleavage of the C1-C2 bond of 3D-(3,5/4)-trihydroxycyclohexane-1,2-dione (THcHDO) to yield 5-deoxy-glucuronate (5DG). This chain is 3D-(3,5/4)-trihydroxycyclohexane-1,2-dione hydrolase, found in Listeria monocytogenes serotype 4b (strain F2365).